The sequence spans 475 residues: MTKWLSISDVKEKIAATSAEEVTASYLELIDKSSINGYTCTSDGALDTAKMVDKGEVAGPLAGVPIAIKDNISTKGLATTCSSKILEGYVPPYDAHVIERLKEAGAVIIGKTNMDEFAMGTSTESSCYGVTLNPWDHERVPGGSSGGSAAVVAAGEAPISLGSDTGGSVRCPAAFCGVVGLKPTYGAVSRYGLISYANSLEQIGPMATCVEDIAAVMDVIGGYDARDSTSIDKKIDHQAALIDDVKGLKIGVPDEYFGEGVDSGTENAVWDAINKYEEMDASWEKVSMPNTKYALAAYYTIAMSEASSNLARFDGTRYGPRNDGENWHVMASKTRAENFGKEVQRRILLGTYALSAGYQDKYYLKALQVRTLVKQDFDRAFANFDVLMAPTMPLPAFKIGEMVEDPLSQYLIDVNTVPMNLAGVPCISVPCGSSDGLPVGLQIIGNHFDEAALIRAAYSFEKNTDHHKARPGEVA.

Active-site charge relay system residues include K69 and S144. The Acyl-ester intermediate role is filled by S168.

This sequence belongs to the amidase family. GatA subfamily. In terms of assembly, heterotrimer of A, B and C subunits.

The enzyme catalyses L-glutamyl-tRNA(Gln) + L-glutamine + ATP + H2O = L-glutaminyl-tRNA(Gln) + L-glutamate + ADP + phosphate + H(+). Functionally, allows the formation of correctly charged Gln-tRNA(Gln) through the transamidation of misacylated Glu-tRNA(Gln) in organisms which lack glutaminyl-tRNA synthetase. The reaction takes place in the presence of glutamine and ATP through an activated gamma-phospho-Glu-tRNA(Gln). This chain is Glutamyl-tRNA(Gln) amidotransferase subunit A, found in Methanococcoides burtonii (strain DSM 6242 / NBRC 107633 / OCM 468 / ACE-M).